The sequence spans 211 residues: Large ribosomal subunit protein uL3 (211 aa).

A disordered region spans residues 122 to 156; that stretch reads NQKRNNFGRGPMSHGSKNHRAPGSIGAGTTPGRVY.

It belongs to the universal ribosomal protein uL3 family. Part of the 50S ribosomal subunit. Forms a cluster with proteins L14 and L19.

One of the primary rRNA binding proteins, it binds directly near the 3'-end of the 23S rRNA, where it nucleates assembly of the 50S subunit. In Nostoc sp. (strain PCC 7120 / SAG 25.82 / UTEX 2576), this protein is Large ribosomal subunit protein uL3.